Here is an 82-residue protein sequence, read N- to C-terminus: ATP synthase subunit c (82 aa).

2 helical membrane-spanning segments follow: residues 3 to 23 (PLVASASVLAAALAIGLASLG) and 57 to 77 (LAFMESLTIYGLVIALVLLFA).

Belongs to the ATPase C chain family. In terms of assembly, F-type ATPases have 2 components, F(1) - the catalytic core - and F(0) - the membrane proton channel. F(1) has five subunits: alpha(3), beta(3), gamma(1), delta(1), epsilon(1). F(0) has four main subunits: a(1), b(1), b'(1) and c(10-14). The alpha and beta chains form an alternating ring which encloses part of the gamma chain. F(1) is attached to F(0) by a central stalk formed by the gamma and epsilon chains, while a peripheral stalk is formed by the delta, b and b' chains.

It localises to the cellular thylakoid membrane. F(1)F(0) ATP synthase produces ATP from ADP in the presence of a proton or sodium gradient. F-type ATPases consist of two structural domains, F(1) containing the extramembraneous catalytic core and F(0) containing the membrane proton channel, linked together by a central stalk and a peripheral stalk. During catalysis, ATP synthesis in the catalytic domain of F(1) is coupled via a rotary mechanism of the central stalk subunits to proton translocation. Its function is as follows. Key component of the F(0) channel; it plays a direct role in translocation across the membrane. A homomeric c-ring of between 10-14 subunits forms the central stalk rotor element with the F(1) delta and epsilon subunits. The chain is ATP synthase subunit c from Synechococcus sp. (strain PCC 6716).